Reading from the N-terminus, the 125-residue chain is MADEELEALRRQRLAELQAKHGDPGDAAQQEAKHREAEMRNSILAQVLDQSARARLSNLALVKPEKTKAVENYLIQMARYGQLSEKVSEQGLIEILKKVSQQTEKTTTVKFNRRKVMDSDEDDDY.

Residue Ala-2 is modified to N-acetylalanine. Positions 16–36 are disordered; the sequence is ELQAKHGDPGDAAQQEAKHRE. Ser-51 carries the post-translational modification Phosphoserine. Lys-63 is subject to N6-acetyllysine. Ser-119 is modified (phosphoserine).

The protein belongs to the PDCD5 family. In terms of tissue distribution, widely expressed. Highest levels in heart, testis, kidney, pituitary gland, adrenal gland and placenta.

Functionally, may function in the process of apoptosis. This Homo sapiens (Human) protein is Programmed cell death protein 5 (PDCD5).